The primary structure comprises 693 residues: Sodium-dependent dopamine transporter (693 aa).

Residues Met-1 to Glu-56 lie on the Cytoplasmic side of the membrane. Residues Ala-57–Gly-95 form a discontinuously helical membrane-spanning segment. The Na(+) site is built by Gly-75, Ala-77, Val-78, Asp-79, and Asn-82. Asp-79 provides a ligand contact to dopamine. 2 helical membrane-spanning segments follow: residues Gly-96 to Gly-127 and Ala-128 to Phe-171. The dopamine site is built by Ser-149 and Gly-153. The Extracellular segment spans residues Thr-172–Pro-233. A disulfide bond links Cys-180 and Cys-189. Asn-181, Asn-196, and Asn-202 each carry an N-linked (GlcNAc...) asparagine glycan. A run of 2 helical transmembrane segments spans residues Arg-234–Trp-253 and Lys-254–Leu-284. Residues Pro-285–Cys-303 are Extracellular-facing. A discontinuously helical membrane pass occupies residues Glu-304 to Tyr-332. Position 314 (Gln-314) interacts with chloride. Phe-317 lines the dopamine pocket. Na(+) is bound by residues Ser-318 and Asn-350. A chloride-binding site is contributed by Ser-318. Residues Asn-333–Ser-373 form a helical membrane-spanning segment. Chloride is bound at residue Ser-354. Topologically, residues Val-374–Thr-397 are extracellular. The next 3 membrane-spanning stretches (helical) occupy residues Leu-398 to His-439, Arg-440 to Asn-463, and Gly-464 to Tyr-496. 3 residues coordinate Na(+): Leu-415, Asp-418, and Ser-419. Positions 419 and 420 each coordinate dopamine. Residues Gly-497–Pro-513 are Cytoplasmic-facing. The helical transmembrane segment at Ser-514–Thr-539 threads the bilayer. The Extracellular segment spans residues Phe-540–Phe-550. A helical membrane pass occupies residues Pro-551–Leu-580. An interaction with TGFB1I1 region spans residues Gly-558–Lys-587. The Cytoplasmic segment spans residues Pro-581–Tyr-693.

Belongs to the sodium:neurotransmitter symporter (SNF) (TC 2.A.22) family. SLC6A3 subfamily. As to quaternary structure, monomer. Homooligomer; disulfide-linked. Interacts with PRKCABP and TGFB1I1. Interacts (via N-terminus) with SYNGR3 (via N-terminus). Interacts with SLC18A2. Interacts with TOR1A (ATP-bound); TOR1A regulates SLC6A3 subcellular location. Interacts with alpha-synuclein/SNCA. Interacts with SEPTIN4. Expressed in the neurons of the substantia nigra of the brain.

Its subcellular location is the cell membrane. It is found in the cell projection. It localises to the neuron projection. The protein resides in the axon. It catalyses the reaction dopamine(out) + chloride(out) + Na(+)(out) = dopamine(in) + chloride(in) + Na(+)(in). The catalysed reaction is (R)-noradrenaline(out) + chloride(out) + Na(+)(out) = (R)-noradrenaline(in) + chloride(in) + Na(+)(in). It carries out the reaction dopamine(out) + chloride(out) + 2 Na(+)(out) = dopamine(in) + chloride(in) + 2 Na(+)(in). Inhibited by GBR 12909 dihydrochloride, amphetamine and cocaine. Inhibited by zinc ions. Mediates sodium- and chloride-dependent transport of dopamine. Also mediates sodium- and chloride-dependent transport of norepinephrine (also known as noradrenaline). Regulator of light-dependent retinal hyaloid vessel regression, downstream of OPN5 signaling. The chain is Sodium-dependent dopamine transporter (SLC6A3) from Bos taurus (Bovine).